We begin with the raw amino-acid sequence, 324 residues long: MAELEFEKPVVELRNKIRELKDYTKNSQMDFSEEIRILEDKLENLEEDIYGNLKVWDRVQIARHAERPTTLDYIEHLFTDFFECHGDRLFGDDAAIVGGIAKYKGMPVTVIGHQRGKDTKENIRRNFGMPHPEGYRKALRLMKQAEKFNRPIICFIDTKGAYPGKAAEERGQSEAIARNLFEMAGLTVPVICIVIGEGGSGGALGLGVGDYIHMLENSTYSVITPEGAAAILWKDAGKAKEAAEAMKITAADLKELGVIDEIIPEAKGGAHRNLSKQSENIDLMIRKTFEQLNGISKDELIEKRYEKYMKIGQVSFSNASIGIK.

The CoA carboxyltransferase C-terminal domain maps to 37–291 (ILEDKLENLE…DLMIRKTFEQ (255 aa)).

Belongs to the AccA family. In terms of assembly, acetyl-CoA carboxylase is a heterohexamer composed of biotin carboxyl carrier protein (AccB), biotin carboxylase (AccC) and two subunits each of ACCase subunit alpha (AccA) and ACCase subunit beta (AccD).

It localises to the cytoplasm. The enzyme catalyses N(6)-carboxybiotinyl-L-lysyl-[protein] + acetyl-CoA = N(6)-biotinyl-L-lysyl-[protein] + malonyl-CoA. It functions in the pathway lipid metabolism; malonyl-CoA biosynthesis; malonyl-CoA from acetyl-CoA: step 1/1. Its function is as follows. Component of the acetyl coenzyme A carboxylase (ACC) complex. First, biotin carboxylase catalyzes the carboxylation of biotin on its carrier protein (BCCP) and then the CO(2) group is transferred by the carboxyltransferase to acetyl-CoA to form malonyl-CoA. The sequence is that of Acetyl-coenzyme A carboxylase carboxyl transferase subunit alpha from Bacillus cereus (strain G9842).